Reading from the N-terminus, the 119-residue chain is uncharacterized protein (119 aa).

This is an uncharacterized protein from Orgyia pseudotsugata (Douglas-fir tussock moth).